We begin with the raw amino-acid sequence, 388 residues long: MADGWMARIDDALAQRRREQTYRERWALSGGNDRLIRDGDRQYLNFSSNDYLGLARHPEVIAAWQQGAAQAGVGAGGSGHVTGYGLHHQRLEQRLADWLGFPRALLFTSGFAANQALVGALTASGDHILADRLSHASLLEAAMHSPATLRRFAHNDADALQRLLRRDCAGNRLVITEGVFSMDGDRAPLPALAEITRAAGCWLMVDDAHGIGVVGEEGRGCAWAPAGRPDLLVVTFGKAVGVSGAAVLCATPVAEYLLQFARHLIYSTAPPPAQIAAIDAALTVVRRGDALRQRLWDNIVRFRRGAAALGFALAPSDTAIQPLVIGDNLRTLQLAQRLRERGVWLTAIRPPTVPPGSARLRITLTSAHLADDIDTLLEALSDAQLQNA.

R23 provides a ligand contact to substrate. 110 to 111 contributes to the pyridoxal 5'-phosphate binding site; that stretch reads GF. H135 contributes to the substrate binding site. Residues S181, H209, and T235 each coordinate pyridoxal 5'-phosphate. N6-(pyridoxal phosphate)lysine is present on K238. T352 is a substrate binding site.

Belongs to the class-II pyridoxal-phosphate-dependent aminotransferase family. BioF subfamily. As to quaternary structure, homodimer. It depends on pyridoxal 5'-phosphate as a cofactor.

It catalyses the reaction 6-carboxyhexanoyl-[ACP] + L-alanine + H(+) = (8S)-8-amino-7-oxononanoate + holo-[ACP] + CO2. It participates in cofactor biosynthesis; biotin biosynthesis. Its function is as follows. Catalyzes the decarboxylative condensation of pimeloyl-[acyl-carrier protein] and L-alanine to produce 8-amino-7-oxononanoate (AON), [acyl-carrier protein], and carbon dioxide. In Sodalis glossinidius (strain morsitans), this protein is 8-amino-7-oxononanoate synthase.